Reading from the N-terminus, the 177-residue chain is Large ribosomal subunit protein uL6 (177 aa).

The protein belongs to the universal ribosomal protein uL6 family. In terms of assembly, part of the 50S ribosomal subunit.

Its function is as follows. This protein binds to the 23S rRNA, and is important in its secondary structure. It is located near the subunit interface in the base of the L7/L12 stalk, and near the tRNA binding site of the peptidyltransferase center. This Thioalkalivibrio sulfidiphilus (strain HL-EbGR7) protein is Large ribosomal subunit protein uL6.